Reading from the N-terminus, the 200-residue chain is Adenine phosphoribosyltransferase (200 aa).

This sequence belongs to the purine/pyrimidine phosphoribosyltransferase family. In terms of assembly, homodimer.

The protein resides in the cytoplasm. The catalysed reaction is AMP + diphosphate = 5-phospho-alpha-D-ribose 1-diphosphate + adenine. Its pathway is purine metabolism; AMP biosynthesis via salvage pathway; AMP from adenine: step 1/1. In terms of biological role, catalyzes a salvage reaction resulting in the formation of AMP, that is energically less costly than de novo synthesis. This chain is Adenine phosphoribosyltransferase, found in Sorangium cellulosum (strain So ce56) (Polyangium cellulosum (strain So ce56)).